We begin with the raw amino-acid sequence, 245 residues long: Acetylglutamate kinase (245 aa).

Residues 41–42, Arg63, and Asn156 contribute to the substrate site; that span reads GG.

The protein belongs to the acetylglutamate kinase family. ArgB subfamily.

Its subcellular location is the cytoplasm. It carries out the reaction N-acetyl-L-glutamate + ATP = N-acetyl-L-glutamyl 5-phosphate + ADP. Its pathway is amino-acid biosynthesis; L-arginine biosynthesis; N(2)-acetyl-L-ornithine from L-glutamate: step 2/4. Its function is as follows. Catalyzes the ATP-dependent phosphorylation of N-acetyl-L-glutamate. This Streptococcus mutans serotype c (strain ATCC 700610 / UA159) protein is Acetylglutamate kinase.